We begin with the raw amino-acid sequence, 352 residues long: Photosystem II D2 protein (352 aa).

At T2 the chain carries N-acetylthreonine. T2 bears the Phosphothreonine mark. The helical transmembrane segment at 40 to 60 threads the bilayer; the sequence is CAYFALGGWLTGTTFVTSWYT. Position 117 (H117) interacts with chlorophyll a. A helical transmembrane segment spans residues 124–140; it reads GFMLRQFEIARAVKIRP. Pheophytin a-binding residues include Q129 and N142. The helical transmembrane segment at 152 to 165 threads the bilayer; that stretch reads VFVSVFLIYPLGQA. H197 contacts chlorophyll a. The helical transmembrane segment at 207 to 227 threads the bilayer; that stretch reads AALLCAIHGATVENTLFEDGD. H214 and F261 together coordinate a plastoquinone. H214 contacts Fe cation. H268 provides a ligand contact to Fe cation. A helical membrane pass occupies residues 278 to 294; sequence GLWMSALGVVGLALNLR.

The protein belongs to the reaction center PufL/M/PsbA/D family. In terms of assembly, PSII is composed of 1 copy each of membrane proteins PsbA, PsbB, PsbC, PsbD, PsbE, PsbF, PsbH, PsbI, PsbJ, PsbK, PsbL, PsbM, PsbT, PsbX, PsbY, PsbZ, Psb30/Ycf12, at least 3 peripheral proteins of the oxygen-evolving complex and a large number of cofactors. It forms dimeric complexes. Requires The D1/D2 heterodimer binds P680, chlorophylls that are the primary electron donor of PSII, and subsequent electron acceptors. It shares a non-heme iron and each subunit binds pheophytin, quinone, additional chlorophylls, carotenoids and lipids. There is also a Cl(-1) ion associated with D1 and D2, which is required for oxygen evolution. The PSII complex binds additional chlorophylls, carotenoids and specific lipids. as cofactor.

It is found in the plastid. The protein resides in the chloroplast thylakoid membrane. It carries out the reaction 2 a plastoquinone + 4 hnu + 2 H2O = 2 a plastoquinol + O2. Its function is as follows. Photosystem II (PSII) is a light-driven water:plastoquinone oxidoreductase that uses light energy to abstract electrons from H(2)O, generating O(2) and a proton gradient subsequently used for ATP formation. It consists of a core antenna complex that captures photons, and an electron transfer chain that converts photonic excitation into a charge separation. The D1/D2 (PsbA/PsbD) reaction center heterodimer binds P680, the primary electron donor of PSII as well as several subsequent electron acceptors. D2 is needed for assembly of a stable PSII complex. This Tupiella akineta (Green alga) protein is Photosystem II D2 protein.